A 393-amino-acid chain; its full sequence is PxcA-like protein (393 aa).

The next 4 helical transmembrane spans lie at Phe173–Phe193, Ile271–Phe291, Phe306–Val326, and Val354–Phe374.

The protein belongs to the CemA family. PxcL subfamily.

The protein resides in the cell inner membrane. In terms of biological role, together with PxcA, contributes to transient H(+) uptake following dark to light transition. Required for H(+) influx to activate the Calvin-Benson-Bassham cycle. May also be involved in CO(2) transport. In Synechocystis sp. (strain ATCC 27184 / PCC 6803 / Kazusa), this protein is PxcA-like protein.